We begin with the raw amino-acid sequence, 784 residues long: MPRALWTAWVWAVIILSMEGASHQASSLSCDPTGVCDGHSRSLNSIPSGLTDGVKSLDLSNNEITYVSNRDLQRCVNLKTLRLGANEIHTVEEDSFFHLRNLEYLDLSYNRLSNLSSSWFRSLYALKFLNLLGNVYKTLGETSLFSHLPNLRTLKVGNSNSFTEIHEKDFTGLIFLEELEISAQNLQIYVPKSLKSIQNISHLILHLKQPVLLVDILVDIVSSLDCLELRDTNLHTFHFSEASISEMNTSVKKLIFRNVQFTDESFVEVVKLFNYVSGILEVEFDDCTHDGIGDFRALSLDRIRHLGNVETLTIRKLHIPQFFLFHDLSSIYPLTGKVKRVTIESSKVFLVPCLLSQHLKSLEYLDLSENLMSEETLKNSACKDAWPFLQTLVLRQNRLKSLEKTGELLLTLKNLNNLDISKNNFLSMPETCQWPGKMKQLNLSSTRIHSLTQCLPQTLEILDVSNNNLDSFSLILPQLKELYISRNKLKTLPDASFLPVLSVMRISGNIINTFSKEQLDSFPQLKALEAGGNNFICSCDFLSFTQGQQALARVLVDWPDGYRCDAPSHVRGQRVQDARLSLSECHRAAVVSAVCCALFLLLLLTGVLCHRFHGLWYMKMMWAWLQAKRKPRKAPRRDLCYDAFVSYSEQDSYWVENLMVQELEHFNPPFKLCLHKRDFVPGKWIIDNIIDSIEKSRKTIFVLSENFVRSEWCKYELDFSHFRLFDENNDAAILILLEPIDKKAIPQRFCKLRKIMNTKTYLEWPTDETQQEAFWLNLRAAIRS.

Positions 1-20 are cleaved as a signal peptide; the sequence is MPRALWTAWVWAVIILSMEG. Residues 21–587 are Extracellular-facing; that stretch reads ASHQASSLSC…ARLSLSECHR (567 aa). A disulfide bond links Cys30 and Cys36. LRR repeat units follow at residues 54 to 77, 78 to 101, 102 to 125, 126 to 150, 151 to 175, 176 to 199, 200 to 223, 224 to 250, 251 to 278, 279 to 308, 309 to 337, 338 to 361, 362 to 388, 389 to 414, 415 to 437, 438 to 457, 458 to 478, 479 to 500, and 501 to 524; these read VKSL…RCVN, LKTL…HLRN, LEYL…SLYA, LKFL…HLPN, LRTL…GLIF, LEEL…SIQN, ISHL…IVSS, LDCL…MNTS, VKKL…YVSG, ILEV…HLGN, VETL…LTGK, VKRV…HLKS, LEYL…AWPF, LQTL…TLKN, LNNL…WPGK, MKQL…CLPQ, TLEI…ILPQ, LKEL…FLPV, and LSVM…SFPQ. The N-linked (GlcNAc...) asparagine glycan is linked to Asn114. N-linked (GlcNAc...) asparagine glycosylation is present at Asn199. N-linked (GlcNAc...) asparagine glycosylation is present at Asn248. A disulfide bridge connects residues Cys353 and Cys382. Cys432 and Cys454 are disulfide-bonded. Residue Asn442 is glycosylated (N-linked (GlcNAc...) asparagine). Residues 525–579 form the LRRCT domain; sequence LKALEAGGNNFICSCDFLSFTQGQQALARVLVDWPDGYRCDAPSHVRGQRVQDAR. The helical transmembrane segment at 588–608 threads the bilayer; that stretch reads AAVVSAVCCALFLLLLLTGVL. Topologically, residues 609–784 are cytoplasmic; the sequence is CHRFHGLWYM…WLNLRAAIRS (176 aa). The TIR domain occupies 639 to 782; that stretch reads LCYDAFVSYS…AFWLNLRAAI (144 aa). Lys754 participates in a covalent cross-link: Glycyl lysine isopeptide (Lys-Gly) (interchain with G-Cter in ubiquitin). Positions 761–778 match the ATG16L1-binding motif motif; it reads YLEWPTDETQQEAFWLNL.

This sequence belongs to the Toll-like receptor family. As to quaternary structure, interacts with LY96, TLR1 and TLR6 (via extracellular domain). TLR2 seems to exist in heterodimers with either TLR1 or TLR6 before stimulation by the ligand. The heterodimers form bigger oligomers in response to their corresponding ligands as well as further heterotypic associations with other receptors such as CD14 and/or CD36. Binds MYD88 (via TIR domain). Interacts with TICAM1. Interacts with CNPY3. Interacts with ATG16L1. Interacts with PPP1R11. Interacts with TICAM2. Interacts with TIRAP. Ubiquitinated at Lys-754 by PPP1R11, leading to its degradation. Deubiquitinated by USP2. In terms of processing, glycosylation of Asn-442 is critical for secretion of the N-terminal ectodomain of TLR2.

It is found in the membrane. The protein resides in the cytoplasmic vesicle. Its subcellular location is the phagosome membrane. The protein localises to the membrane raft. In terms of biological role, cooperates with LY96 to mediate the innate immune response to bacterial lipoproteins and other microbial cell wall components. Cooperates with TLR1 or TLR6 to mediate the innate immune response to bacterial lipoproteins or lipopeptides. Acts via MYD88 and TRAF6, leading to NF-kappa-B activation, cytokine secretion and the inflammatory response. May also promote apoptosis in response to lipoproteins. Forms activation clusters composed of several receptors depending on the ligand, these clusters trigger signaling from the cell surface and subsequently are targeted to the Golgi in a lipid-raft dependent pathway. Forms the cluster TLR2:TLR6:CD14:CD36 in response to diacylated lipopeptides and TLR2:TLR1:CD14 in response to triacylated lipopeptides. This chain is Toll-like receptor 2 (TLR2), found in Capra hircus (Goat).